Here is a 280-residue protein sequence, read N- to C-terminus: Large ribosomal subunit protein uL2 (280 aa).

Residues 223 to 280 form a disordered region; the sequence is VVMNPVDHPHGGGEGRTSGGRHPVTPWGKPTKGARTRNKNKASSKLIIRSRHAKKKGR. Basic residues predominate over residues 254–280; sequence KGARTRNKNKASSKLIIRSRHAKKKGR.

The protein belongs to the universal ribosomal protein uL2 family. In terms of assembly, part of the 50S ribosomal subunit. Forms a bridge to the 30S subunit in the 70S ribosome.

Its function is as follows. One of the primary rRNA binding proteins. Required for association of the 30S and 50S subunits to form the 70S ribosome, for tRNA binding and peptide bond formation. It has been suggested to have peptidyltransferase activity; this is somewhat controversial. Makes several contacts with the 16S rRNA in the 70S ribosome. The polypeptide is Large ribosomal subunit protein uL2 (Dinoroseobacter shibae (strain DSM 16493 / NCIMB 14021 / DFL 12)).